A 290-amino-acid polypeptide reads, in one-letter code: 33 kDa chaperonin (290 aa).

2 cysteine pairs are disulfide-bonded: cysteine 235/cysteine 237 and cysteine 268/cysteine 271.

This sequence belongs to the HSP33 family. Post-translationally, under oxidizing conditions two disulfide bonds are formed involving the reactive cysteines. Under reducing conditions zinc is bound to the reactive cysteines and the protein is inactive.

It localises to the cytoplasm. Redox regulated molecular chaperone. Protects both thermally unfolding and oxidatively damaged proteins from irreversible aggregation. Plays an important role in the bacterial defense system toward oxidative stress. The sequence is that of 33 kDa chaperonin from Streptococcus gordonii (strain Challis / ATCC 35105 / BCRC 15272 / CH1 / DL1 / V288).